A 103-amino-acid polypeptide reads, in one-letter code: V-type ATP synthase subunit F (103 aa).

The protein belongs to the V-ATPase F subunit family.

In terms of biological role, produces ATP from ADP in the presence of a proton gradient across the membrane. This is V-type ATP synthase subunit F from Clostridium botulinum (strain Alaska E43 / Type E3).